Reading from the N-terminus, the 281-residue chain is 3-mercaptopyruvate sulfurtransferase (281 aa).

Rhodanese domains follow at residues 17–135 and 165–278; these read DDPE…LLEE and HENT…LPVE. Residue arginine 179 coordinates substrate. Cysteine 238 acts as the Cysteine persulfide intermediate in catalysis. Residues 238–244 are substrate specificity; it reads CGSGVTA.

Monomer.

It is found in the cytoplasm. The enzyme catalyses 2-oxo-3-sulfanylpropanoate + [thioredoxin]-dithiol = [thioredoxin]-disulfide + hydrogen sulfide + pyruvate + H(+). In terms of biological role, catalyzes the transfer of sulfur from 3-mercaptopyruvate to a thiol-containing acceptor to form an intramolecular disulfide releasing hydrogen sulfide and pyruvate. May be involved in the enhancement of bacterial growth inhibition by serine. This chain is 3-mercaptopyruvate sulfurtransferase (sseA), found in Escherichia coli (strain K12).